The chain runs to 129 residues: Succinate dehydrogenase cytochrome b556 subunit (129 aa).

The Cytoplasmic portion of the chain corresponds to 1 to 26 (MIRNVKKQRPVNLDLQTIRFPITAIA). The helical transmembrane segment at 27–52 (SILHRVSGVITFIAVGILLWLLGTSL) threads the bilayer. Topologically, residues 53 to 68 (SSPEGFQQAADIMDGF) are periplasmic. The chain crosses the membrane as a helical span at residues 69–89 (IVKFIMWGILTALAYHVIVGI). Position 84 (His84) interacts with heme. At 90-108 (RHMLMDFGYLEETFEAGQR) the chain is on the cytoplasmic side. Residues 109–129 (SAKISFVITVVLSLLAGVLVW) form a helical membrane-spanning segment.

The protein belongs to the cytochrome b560 family. Part of an enzyme complex containing four subunits: a flavoprotein, an iron-sulfur protein, plus two membrane-anchoring proteins, SdhC and SdhD. The complex can form homotrimers. Requires heme as cofactor.

It is found in the cell inner membrane. The protein operates within carbohydrate metabolism; tricarboxylic acid cycle. Membrane-anchoring subunit of succinate dehydrogenase (SDH). This Salmonella typhi protein is Succinate dehydrogenase cytochrome b556 subunit (sdhC).